Reading from the N-terminus, the 91-residue chain is Putative regulatory protein Cphy_2880 (91 aa).

This sequence belongs to the RemA family.

The polypeptide is Putative regulatory protein Cphy_2880 (Lachnoclostridium phytofermentans (strain ATCC 700394 / DSM 18823 / ISDg) (Clostridium phytofermentans)).